The chain runs to 292 residues: Zinc finger protein OZF (292 aa).

10 consecutive C2H2-type zinc fingers follow at residues Phe-16–His-38, Phe-44–His-66, Phe-72–His-94, Phe-100–His-122, Phe-128–His-150, Phe-156–His-178, Tyr-184–His-206, Tyr-212–His-234, Tyr-240–His-262, and Tyr-268–His-290. Residues Lys-28, Lys-51, and Lys-56 each participate in a glycyl lysine isopeptide (Lys-Gly) (interchain with G-Cter in SUMO2) cross-link. Glycyl lysine isopeptide (Lys-Gly) (interchain with G-Cter in SUMO) cross-links involve residues Lys-157 and Lys-169. A Glycyl lysine isopeptide (Lys-Gly) (interchain with G-Cter in SUMO2) cross-link involves residue Lys-173. Residues Tyr-212–His-292 form an interaction with TERF2IP region.

The protein belongs to the krueppel C2H2-type zinc-finger protein family. As to quaternary structure, binds DNA. Interacts with SUMO conjugating enzyme UBC9/UBE2I. Interacts with the telomeric protein TERF2IP. In terms of tissue distribution, expressed in heart, brain, liver, lung, skeletal muscle and kidney, and at much lower level in spleen and testicle. Expressed in lactating mammary gland.

The protein resides in the nucleus. The protein is Zinc finger protein OZF (Znf146) of Mus musculus (Mouse).